A 534-amino-acid chain; its full sequence is Cytochrome c oxidase subunit 1 (534 aa).

Residues 16-36 form a helical membrane-spanning segment; that stretch reads VLYFMLAIFSGMAGTAMSLII. Ca(2+)-binding residues include E39, A42, and G44. Transmembrane regions (helical) follow at residues 57–77, 101–121, 147–167, 182–202, 235–255, and 267–287; these read VLVV…ALIG, IAFW…LVES, AIFA…NFIV, LPLF…SLPV, LFYF…FGII, and VFGE…GFLV. Fe(II)-heme a is bound at residue H62. H241 is a Cu cation binding site. Positions 241 to 245 form a cross-link, 1'-histidyl-3'-tyrosine (His-Tyr); sequence HPEVY. Residue Y245 coordinates O2. Positions 290 and 291 each coordinate Cu cation. 2 helical membrane passes run 310 to 330 and 338 to 358; these read MIIA…IYGG and MLYA…GVAL. H368 and D369 together coordinate Mg(2+). 2 helical membrane passes run 372–392 and 414–434; these read YVVG…LFAG and FWLI…LGIN. H376 is a binding site for heme a3. Position 378 (H378) interacts with Fe(II)-heme a. P441 is a Ca(2+) binding site. A helical membrane pass occupies residues 452–472; sequence YVASIGSFIATLSLFLFIYIL.

Belongs to the heme-copper respiratory oxidase family. As to quaternary structure, component of the cytochrome c oxidase (complex IV, CIV), a multisubunit enzyme composed of a catalytic core of 3 subunits and several supernumerary subunits. The complex exists as a monomer or a dimer and forms supercomplexes (SCs) in the inner mitochondrial membrane with ubiquinol-cytochrome c oxidoreductase (cytochrome b-c1 complex, complex III, CIII). Heme serves as cofactor. Requires Cu cation as cofactor.

Its subcellular location is the mitochondrion inner membrane. It catalyses the reaction 4 Fe(II)-[cytochrome c] + O2 + 8 H(+)(in) = 4 Fe(III)-[cytochrome c] + 2 H2O + 4 H(+)(out). It participates in energy metabolism; oxidative phosphorylation. Functionally, component of the cytochrome c oxidase, the last enzyme in the mitochondrial electron transport chain which drives oxidative phosphorylation. The respiratory chain contains 3 multisubunit complexes succinate dehydrogenase (complex II, CII), ubiquinol-cytochrome c oxidoreductase (cytochrome b-c1 complex, complex III, CIII) and cytochrome c oxidase (complex IV, CIV), that cooperate to transfer electrons derived from NADH and succinate to molecular oxygen, creating an electrochemical gradient over the inner membrane that drives transmembrane transport and the ATP synthase. Cytochrome c oxidase is the component of the respiratory chain that catalyzes the reduction of oxygen to water. Electrons originating from reduced cytochrome c in the intermembrane space (IMS) are transferred via the dinuclear copper A center (CU(A)) of subunit 2 and heme A of subunit 1 to the active site in subunit 1, a binuclear center (BNC) formed by heme A3 and copper B (CU(B)). The BNC reduces molecular oxygen to 2 water molecules using 4 electrons from cytochrome c in the IMS and 4 protons from the mitochondrial matrix. The polypeptide is Cytochrome c oxidase subunit 1 (COXI) (Saccharomyces paradoxus (Yeast)).